Here is a 199-residue protein sequence, read N- to C-terminus: Recombination protein RecR (199 aa).

The C4-type zinc finger occupies 57 to 72 (CQQCRTFTEQNLCAIC). The Toprim domain occupies 81-176 (GMICVVEMPV…KVSRIAHGVP (96 aa)).

Belongs to the RecR family.

Functionally, may play a role in DNA repair. It seems to be involved in an RecBC-independent recombinational process of DNA repair. It may act with RecF and RecO. The chain is Recombination protein RecR from Psychromonas ingrahamii (strain DSM 17664 / CCUG 51855 / 37).